The chain runs to 133 residues: Small ribosomal subunit protein uS8 (133 aa).

The protein belongs to the universal ribosomal protein uS8 family. As to quaternary structure, part of the 30S ribosomal subunit. Contacts proteins S5 and S12.

One of the primary rRNA binding proteins, it binds directly to 16S rRNA central domain where it helps coordinate assembly of the platform of the 30S subunit. The chain is Small ribosomal subunit protein uS8 from Acaryochloris marina (strain MBIC 11017).